The primary structure comprises 1709 residues: Intraflagellar transport protein 122 (1709 aa).

WD repeat units lie at residues 51–89 and 132–171; these read TQHP…ALFK and SFKG…LNSC. A disordered region spans residues 209-229; the sequence is TIPQTVTPSASASGRSGSGKR. A WD 3 repeat occupies 634-673; the sequence is LHRSPIVSLDISPDRKYISVVDRSDVVSVYKFLDDSEIVL. The LRR 1 repeat unit spans residues 1231–1256; that stretch reads IEALERLRLSGNTSKEAIIIKQLIDA. The tract at residues 1378–1404 is disordered; that stretch reads LSGEDTVKASSQRSKKDNPPSLRSTIG. The LRR 2 repeat unit spans residues 1414–1436; sequence LGSLAHIDLGINNMNIPPGISEL.

It is found in the cell projection. The protein resides in the cilium. It localises to the flagellum. Its subcellular location is the cytoplasm. The protein localises to the cytoskeleton. It is found in the flagellum axoneme. The protein resides in the flagellum basal body. Functionally, component of the intraflagellar transport complex A (IFT-A) involved in flagellar assembly. This Giardia intestinalis (strain ATCC 50803 / WB clone C6) (Giardia lamblia) protein is Intraflagellar transport protein 122.